The chain runs to 281 residues: Tumor necrosis factor ligand superfamily member 6 (281 aa).

Topologically, residues 1–80 (MQQPFNYPYP…LKKRGNHSTG (80 aa)) are cytoplasmic. Residues 20-71 (SSPWAPPGTVLPCPTSVPRRPGQRRPPPPPPPPPLPPPPPPPPLPPLPLPPL) form a disordered region. Residues 43–70 (RRPPPPPPPPPLPPPPPPPPLPPLPLPP) show a composition bias toward pro residues. The chain crosses the membrane as a helical; Signal-anchor for type II membrane protein span at residues 81-102 (LCLLVMFFMVLVALVGLGLGMF). The Extracellular segment spans residues 103–281 (QLFHLQKELA…SQTFFGLYKL (179 aa)). Residues 118 to 128 (TSQMHTASSLE) are compositionally biased toward polar residues. Residues 118-142 (TSQMHTASSLEKQIGHPSPPPEKKE) form a disordered region. The 137-residue stretch at 145 to 281 (KVAHLTGKSN…SQTFFGLYKL (137 aa)) folds into the THD domain. A glycan (N-linked (GlcNAc...) asparagine) is linked at Asn184. A disulfide bridge links Cys202 with Cys233. 2 N-linked (GlcNAc...) asparagine glycosylation sites follow: Asn250 and Asn260.

Belongs to the tumor necrosis factor family. Homotrimer. Interacts with ARHGAP9, BAIAP2L1, BTK, CACNB3, CACNB4, CRK, DLG2, DNMBP, DOCK4, EPS8L3, FGR, FYB1, FYN, HCK, ITK, ITSN2, KALRN, LYN, MACC1, MIA, MPP4, MYO15A, NCF1, NCK1, NCK2, NCKIPSD, OSTF1, PIK3R1, PSTPIP1, RIMBP3C, SAMSN1, SH3GL3, SH3PXD2B, SH3PXD2A, SH3RF2, SKAP2, SNX33, SNX9, SORBS3, SPTA1, SRC, SRGAP1, SRGAP2, SRGAP3, TEC, TJP3 and YES1. The soluble form derives from the membrane form by proteolytic processing. The membrane-bound form undergoes two successive intramembrane proteolytic cleavages. The first one is processed by ADAM10 producing an N-terminal fragment, which lacks the receptor-binding extracellular domain. This ADAM10-processed FasL (FasL APL) remnant form is still membrane anchored and further processed by SPPL2A that liberates the FasL intracellular domain (FasL ICD). FasL shedding by ADAM10 is a prerequisite for subsequent intramembrane cleavage by SPPL2A in T-cells. Post-translationally, N-glycosylated. Glycosylation enhances apoptotic activity. In terms of processing, phosphorylated by FGR on tyrosine residues; this is required for ubiquitination and subsequent internalization. Monoubiquitinated.

The protein localises to the cell membrane. The protein resides in the cytoplasmic vesicle lumen. It localises to the lysosome lumen. Its subcellular location is the secreted. It is found in the nucleus. Its function is as follows. Cytokine that binds to TNFRSF6/FAS, a receptor that transduces the apoptotic signal into cells. Involved in cytotoxic T-cell-mediated apoptosis, natural killer cell-mediated apoptosis and in T-cell development. Initiates fratricidal/suicidal activation-induced cell death (AICD) in antigen-activated T-cells contributing to the termination of immune responses. TNFRSF6/FAS-mediated apoptosis also has a role in the induction of peripheral tolerance. Binds to TNFRSF6B/DcR3, a decoy receptor that blocks apoptosis. Induces FAS-mediated activation of NF-kappa-B, initiating non-apoptotic signaling pathways. Can induce apoptosis but does not appear to be essential for this process. Functionally, cytoplasmic form induces gene transcription inhibition. The sequence is that of Tumor necrosis factor ligand superfamily member 6 (FASLG) from Homo sapiens (Human).